A 195-amino-acid polypeptide reads, in one-letter code: Thymidine kinase (195 aa).

ATP contacts are provided by residues 15–22 and 88–91; these read GSMFSGKS and DEVQ. Glu89 (proton acceptor) is an active-site residue. Phe120 lines the substrate pocket. Cys145 and Cys148 together coordinate Zn(2+). Residues 170–174 and Tyr179 each bind substrate; that span reads IILVG. Residues Cys183 and Cys186 each contribute to the Zn(2+) site.

This sequence belongs to the thymidine kinase family. As to quaternary structure, homotetramer.

It localises to the cytoplasm. It catalyses the reaction thymidine + ATP = dTMP + ADP + H(+). The protein is Thymidine kinase of Bacillus cereus (strain ATCC 14579 / DSM 31 / CCUG 7414 / JCM 2152 / NBRC 15305 / NCIMB 9373 / NCTC 2599 / NRRL B-3711).